Reading from the N-terminus, the 177-residue chain is UPF0114 protein HPAG1_0183 (177 aa).

4 helical membrane passes run 15-35 (WLLA…GYVF), 54-74 (LVLS…VLMV), 102-122 (FNAL…IFLL), and 145-165 (PIFW…LAAV).

It belongs to the UPF0114 family.

Its subcellular location is the cell membrane. This Helicobacter pylori (strain HPAG1) protein is UPF0114 protein HPAG1_0183.